The following is a 330-amino-acid chain: Beta-ketoacyl-[acyl-carrier-protein] synthase III (330 aa).

Active-site residues include C118 and H257. Positions 258–262 (QANLR) are ACP-binding. N287 is a catalytic residue.

It belongs to the thiolase-like superfamily. FabH family. As to quaternary structure, homodimer.

Its subcellular location is the cytoplasm. The enzyme catalyses malonyl-[ACP] + acetyl-CoA + H(+) = 3-oxobutanoyl-[ACP] + CO2 + CoA. The protein operates within lipid metabolism; fatty acid biosynthesis. In terms of biological role, catalyzes the condensation reaction of fatty acid synthesis by the addition to an acyl acceptor of two carbons from malonyl-ACP. Catalyzes the first condensation reaction which initiates fatty acid synthesis and may therefore play a role in governing the total rate of fatty acid production. Possesses both acetoacetyl-ACP synthase and acetyl transacylase activities. Its substrate specificity determines the biosynthesis of branched-chain and/or straight-chain of fatty acids. This chain is Beta-ketoacyl-[acyl-carrier-protein] synthase III, found in Nitratidesulfovibrio vulgaris (strain DSM 19637 / Miyazaki F) (Desulfovibrio vulgaris).